The chain runs to 515 residues: Ribose import ATP-binding protein RbsA 1 (515 aa).

ABC transporter domains follow at residues 8–244 (FQME…IGRE) and 256–503 (VPAT…LNIH). 40 to 47 (GENGAGKS) provides a ligand contact to ATP.

This sequence belongs to the ABC transporter superfamily. Ribose importer (TC 3.A.1.2.1) family. The complex is composed of an ATP-binding protein (RbsA), two transmembrane proteins (RbsC) and a solute-binding protein (RbsB).

The protein localises to the cell inner membrane. It carries out the reaction D-ribose(out) + ATP + H2O = D-ribose(in) + ADP + phosphate + H(+). In terms of biological role, part of the ABC transporter complex RbsABC involved in ribose import. Responsible for energy coupling to the transport system. In Mesorhizobium japonicum (strain LMG 29417 / CECT 9101 / MAFF 303099) (Mesorhizobium loti (strain MAFF 303099)), this protein is Ribose import ATP-binding protein RbsA 1.